A 392-amino-acid chain; its full sequence is MKTAARLDRIPPYLFAEIDRRRDEAVARGVDIINMGIGDPDKPTPPVVLEAMHAAIDDPSTHNYPPYKGTKAYREAAAAWFERRFGVGGFHPDTEVISSIGSKEAIHNTFLAFVDPGDYTLIPDPAYPVYRTSTIFAGGEFFAMPLLPENQLLPDLEAVPETVARKAKLLWLNYPNNPTGAVASLEFFEKVVHFAKKHDILVCHDNAYSEMAYDGYKPPSILQVPGARDVAIEFLSCSKAYNMTGWRVGFVIGNRTGIAGLGQVKTNIDSGVFKAIQQAAIAAFGLDDERLHALMAVYQNRRNIIVEGLRSLGWPLEAPKATLYVWAPIPKSFGSSVEFVGALLDKCGIIVPPGNGYGEHGEGFFRIALTVPDERMREAIGRMEAAGIRFEG.

Residues tyrosine 13 and glycine 38 each contribute to the substrate site. Pyridoxal 5'-phosphate is bound by residues tyrosine 67, 102–103 (SK), tyrosine 127, asparagine 177, tyrosine 208, and 236–238 (SCS). Lysine 103, tyrosine 127, and asparagine 177 together coordinate substrate. At lysine 239 the chain carries N6-(pyridoxal phosphate)lysine. Residue arginine 247 coordinates pyridoxal 5'-phosphate. Arginine 366 serves as a coordination point for substrate.

The protein belongs to the class-I pyridoxal-phosphate-dependent aminotransferase family. LL-diaminopimelate aminotransferase subfamily. In terms of assembly, homodimer. Requires pyridoxal 5'-phosphate as cofactor.

The catalysed reaction is (2S,6S)-2,6-diaminopimelate + 2-oxoglutarate = (S)-2,3,4,5-tetrahydrodipicolinate + L-glutamate + H2O + H(+). It participates in amino-acid biosynthesis; L-lysine biosynthesis via DAP pathway; LL-2,6-diaminopimelate from (S)-tetrahydrodipicolinate (aminotransferase route): step 1/1. Functionally, involved in the synthesis of meso-diaminopimelate (m-DAP or DL-DAP), required for both lysine and peptidoglycan biosynthesis. Catalyzes the direct conversion of tetrahydrodipicolinate to LL-diaminopimelate. Can also use m-DAP instead of LL-DAP as the amino-group donor. The chain is LL-diaminopimelate aminotransferase from Gloeobacter violaceus (strain ATCC 29082 / PCC 7421).